The primary structure comprises 1207 residues: ATP-dependent helicase/nuclease subunit A (1207 aa).

In terms of domain architecture, UvrD-like helicase ATP-binding spans 2 to 472 (PQFTKEQQQA…ILLSDNFRST (471 aa)). Position 23 to 30 (23 to 30 (ASAGSGKT)) interacts with ATP. Positions 492–783 (GGIDYSKEGQ…RLMTIHGSKG (292 aa)) constitute a UvrD-like helicase C-terminal domain.

This sequence belongs to the helicase family. AddA subfamily. In terms of assembly, heterodimer of AddA and AddB/RexB. Mg(2+) serves as cofactor.

It catalyses the reaction Couples ATP hydrolysis with the unwinding of duplex DNA by translocating in the 3'-5' direction.. It carries out the reaction ATP + H2O = ADP + phosphate + H(+). In terms of biological role, the heterodimer acts as both an ATP-dependent DNA helicase and an ATP-dependent, dual-direction single-stranded exonuclease. Recognizes the chi site generating a DNA molecule suitable for the initiation of homologous recombination. The AddA nuclease domain is required for chi fragment generation; this subunit has the helicase and 3' -&gt; 5' nuclease activities. In Lactobacillus acidophilus (strain ATCC 700396 / NCK56 / N2 / NCFM), this protein is ATP-dependent helicase/nuclease subunit A.